We begin with the raw amino-acid sequence, 136 residues long: Selenoprotein M (136 aa).

The signal sequence occupies residues 1–19 (MWLPLPLLLGLLQLQPILS). Residues Cys-38 and Sec-41 each act as nucleophile in the active site. Residues 38–41 (CGGU) constitute a cross-link (cysteinyl-selenocysteine (Cys-Sec)). Position 41 (Sec-41) is a non-standard amino acid, selenocysteine. The disordered stretch occupies residues 111 to 136 (SSPDAPVPAEFKMAPARASGDTKEDL). Residues 133-136 (KEDL) carry the Prevents secretion from ER motif.

This sequence belongs to the selenoprotein M/F family.

It is found in the endoplasmic reticulum. Its function is as follows. May function as a thiol-disulfide oxidoreductase that participates in disulfide bond formation. In Xenopus laevis (African clawed frog), this protein is Selenoprotein M (selenom).